A 547-amino-acid polypeptide reads, in one-letter code: Large cysteine-rich periplasmic protein OmcB, serovar C (547 aa).

The signal sequence occupies residues 1-22 (MNKLIRRAVTIFAVTSVASLFA). Positions 23-40 (SGVLETSMAESLSTNVIS) are excised as a propeptide. Residues 45-84 (KAKDNTSHKSKKARKNHSKETPVDRKEVAPVHESKATGPK) form a disordered region. Residues 52–61 (HKSKKARKNH) are compositionally biased toward basic residues. A compositionally biased stretch (basic and acidic residues) spans 62 to 79 (SKETPVDRKEVAPVHESK).

In terms of assembly, part of a disulfide cross-linked outer membrane complex (COMC) composed of the major outer membrane porin (MOMP), the small cysteine-rich protein (OmcA) and the large cysteine-rich periplasmic protein (OmcB).

Its subcellular location is the periplasm. In terms of biological role, in elementary bodies (EBs, the infectious stage, which is able to survive outside the host cell) provides the structural integrity of the outer envelope through disulfide cross-links with the small cysteine-rich protein and the major outer membrane porin. It has been described in publications as the Sarkosyl-insoluble COMC (Chlamydia outer membrane complex), and serves as the functional equivalent of peptidoglycan. The chain is Large cysteine-rich periplasmic protein OmcB, serovar C (omcB) from Chlamydia trachomatis.